Reading from the N-terminus, the 91-residue chain is uncharacterized protein (91 aa).

The interval 71-91 is disordered; that stretch reads NRENNSRSSVKQIINQETEEE. Polar residues predominate over residues 76–91; it reads SRSSVKQIINQETEEE.

This is an uncharacterized protein from Bacillus subtilis (strain 168).